Consider the following 219-residue polypeptide: Small ribosomal subunit protein uS3 (219 aa).

In terms of domain architecture, KH type-2 spans Ile41 to Lys110.

This sequence belongs to the universal ribosomal protein uS3 family. In terms of assembly, part of the 30S ribosomal subunit. Forms a tight complex with proteins S10 and S14.

Its function is as follows. Binds the lower part of the 30S subunit head. Binds mRNA in the 70S ribosome, positioning it for translation. The protein is Small ribosomal subunit protein uS3 of Orientia tsutsugamushi (strain Ikeda) (Rickettsia tsutsugamushi).